Reading from the N-terminus, the 72-residue chain is uncharacterized protein (72 aa).

The interval 51-72 is disordered; it reads AKGGRQKGEVVGVDDQCKEHKE.

The protein belongs to the YiiE family.

This is an uncharacterized protein from Escherichia coli O157:H7.